Here is a 372-residue protein sequence, read N- to C-terminus: Glutamate 5-kinase (372 aa).

Position 14 (Lys-14) interacts with ATP. Residues Ser-54, Asp-141, and Asn-153 each contribute to the substrate site. 173–174 (TD) contributes to the ATP binding site. One can recognise a PUA domain in the interval 280–358 (RGHVVIDAGA…GEIESVLGYM (79 aa)).

This sequence belongs to the glutamate 5-kinase family.

Its subcellular location is the cytoplasm. The catalysed reaction is L-glutamate + ATP = L-glutamyl 5-phosphate + ADP. Its pathway is amino-acid biosynthesis; L-proline biosynthesis; L-glutamate 5-semialdehyde from L-glutamate: step 1/2. Its function is as follows. Catalyzes the transfer of a phosphate group to glutamate to form L-glutamate 5-phosphate. In Burkholderia lata (strain ATCC 17760 / DSM 23089 / LMG 22485 / NCIMB 9086 / R18194 / 383), this protein is Glutamate 5-kinase.